We begin with the raw amino-acid sequence, 97 residues long: Citrate lyase acyl carrier protein (97 aa).

At serine 14 the chain carries O-(phosphoribosyl dephospho-coenzyme A)serine.

The protein belongs to the CitD family. Oligomer with a subunit composition of (alpha,beta,gamma)6.

The protein resides in the cytoplasm. Covalent carrier of the coenzyme of citrate lyase. The chain is Citrate lyase acyl carrier protein from Yersinia enterocolitica serotype O:8 / biotype 1B (strain NCTC 13174 / 8081).